Consider the following 144-residue polypeptide: Protein E6 (144 aa).

2 zinc fingers span residues 32 to 68 (CAFC…CALC) and 105 to 141 (CWLC…CLHC).

The protein belongs to the papillomaviridae E6 protein family. In terms of assembly, forms homodimers. Interacts with ubiquitin-protein ligase UBE3A/E6-AP; this interaction stimulates UBE3A ubiquitin activity. Interacts with host TP53 and EP300; this interaction inhibits TP53 activity.

The protein localises to the host cytoplasm. Its subcellular location is the host nucleus. Plays a major role in the induction and maintenance of cellular transformation. E6 associates with host UBE3A/E6-AP ubiquitin-protein ligase and modulates its activity. Sequesters tumor suppressor TP53 in the host cytoplasm and modulates its activity by interacting with host EP300 that results in the reduction of TP53 acetylation and activation. In turn, apoptosis induced by DNA damage is inhibited. E6 also protects host keratinocytes from apoptosis by mediating the degradation of host BAK1. May also inhibit host immune response. The chain is Protein E6 from Homo sapiens (Human).